Reading from the N-terminus, the 337-residue chain is uncharacterized protein (337 aa).

A run of 2 helical transmembrane segments spans residues 4–24 (FIFF…FSLI) and 26–46 (LLLW…LFVL).

This sequence belongs to the plectrovirus ORF2 family.

The protein localises to the host membrane. This is an uncharacterized protein from Spiroplasma virus SpV1-R8A2 B (SpV1).